A 1163-amino-acid chain; its full sequence is NACHT, LRR and PYD domains-containing protein 5 (1163 aa).

Basic and acidic residues-rich tracts occupy residues 1-42 (MGPP…KDQG), 56-94 (PEKE…KDQG), and 108-127 (PEKD…EQKS). Residues 1 to 201 (MGPPEKESKA…TEADKDNGGD (201 aa)) form a disordered region. Residues 128–137 (ESTMSPSENV) are compositionally biased toward polar residues. Positions 153–173 (ASERKMTSPENDSKSIQKDQG) are enriched in basic and acidic residues. The NACHT domain occupies 243-565 (HTIILHGRPG…AALYYVLEGL (323 aa)). Position 249–256 (249–256 (GRPGVGKS)) interacts with ATP. LRR repeat units lie at residues 801 to 822 (NLKY…LACE), 830 to 851 (SVET…MIST), 858 to 878 (RLKC…ISLG), 887 to 906 (LLQK…CHLL), 915 to 935 (NLTH…QQLC), 944 to 964 (ALQR…GFLA), 972 to 993 (KLTH…LLCE), 1001 to 1022 (YLQE…DLAC), 1029 to 1050 (HLKS…TLCE), 1058 to 1079 (SLRR…ALSL), and 1086 to 1107 (HLNS…KLCS).

The protein belongs to the NLRP family. In terms of assembly, component of the subcortical maternal complex (SCMC), at least composed of NLRP5, KHDC3, OOEP, and TLE6. Within the complex, interacts with OOEP, KHDC3 and TLE6. The SCMC may facilitate translocation of its components between the nuclear and cytoplasmic compartments. As part of the SCMC interacts with the SCMC-associated protein ZBED3. As part of the SCMC interacts with the SCMC-associated protein CFL1/Cofilin-1. Interacts with PRKCE. Interacts with TUBB3 at cytoskeleton microtubules. Phosphorylated by PRKCE.

It localises to the cytoplasm. It is found in the cytoplasmic vesicle. The protein localises to the secretory vesicle. The protein resides in the cortical granule. Its subcellular location is the mitochondrion. It localises to the nucleus. It is found in the nucleolus. The protein localises to the golgi apparatus. Its function is as follows. Component of the subcortical maternal complex (SCMC), a multiprotein complex that plays a key role in early embryonic development. The SCMC complex is a structural constituent of cytoplasmic lattices, which consist in fibrous structures found in the cytoplasm of oocytes and preimplantation embryos. They are required to store maternal proteins critical for embryonic development, such as proteins that control epigenetic reprogramming of the preimplantation embryo, and prevent their degradation or activation. Required for the localization of cortical granules to the cortex of oocytes, via association with the cortical actin scaffold. Required for cortical actin clearance prior to oocyte exocytosis and prevention of polyspermy. Involved in regulating post-fertilization Ca(2+) release and endoplasmic reticulum storage (ER) storage via regulation of cellular localization. May be involved in the localization of mitochondria to the cytoplasm and perinuclear region in oocytes and early stage embryos, independent of its role in CPL formation. This is NACHT, LRR and PYD domains-containing protein 5 from Mus musculus (Mouse).